The sequence spans 648 residues: Forkhead box protein N1 (648 aa).

The tract at residues 1–105 (MVSLPPPQSD…SDKYPGFGFE (105 aa)) is disordered. Pro residues predominate over residues 58-67 (ERTPSLPPHS). The segment at residues 271 to 367 (KPIYSYSILI…EELQKWKRKD (97 aa)) is a DNA-binding region (fork-head). Disordered stretches follow at residues 392–445 (LGSP…LLMG), 458–508 (LSPG…LLAE), and 623–648 (LEPT…VALA). A compositionally biased stretch (pro residues) spans 462–473 (LAPPGPPQPLFP).

In terms of tissue distribution, expressed in thymus.

The protein localises to the nucleus. Functionally, transcriptional regulator which regulates the development, differentiation, and function of thymic epithelial cells (TECs) both in the prenatal and postnatal thymus. Acts as a master regulator of the TECs lineage development and is required from the onset of differentiation in progenitor TECs in the developing fetus to the final differentiation steps through which TECs mature to acquire their full functionality. Regulates, either directly or indirectly the expression of a variety of genes that mediate diverse aspects of thymus development and function, including MHC Class II, DLL4, CCL25, CTSL, CD40 and PAX1. Regulates the differentiation of the immature TECs into functional cortical TECs (cTECs) and medullary TECs (mTECs). Essential for maintenance of mTECs population in the postnatal thymus. Involved in the morphogenesis and maintenance of the three-dimensional thymic microstructure which is necessary for a fully functional thymus. Plays an important role in the maintenance of hematopoiesis and particularly T lineage progenitors within the bone marrow niche with age. Essential for the vascularization of the thymus anlage. Promotes the terminal differentiation of epithelial cells in the epidermis and hair follicles, partly by negatively regulating the activity of protein kinase C. Plays a crucial role in the early prenatal stages of T-cell ontogeny. This chain is Forkhead box protein N1 (FOXN1), found in Homo sapiens (Human).